The sequence spans 448 residues: Gamma conglutin 2 (448 aa).

A signal peptide spans 1 to 33 (MAKNMAQIFPFIAVFLSCSFIFVLSSSQNSQSL). The Peptidase A1 domain maps to 63 to 428 (HWANIHKRTP…DLERSRVEFN (366 aa)). Disulfide bonds link Cys91/Cys181, Cys105/Cys118, Cys110/Cys136, Cys121/Cys131, and Cys349/Cys390. Asn133 carries an N-linked (GlcNAc...) asparagine glycan.

Belongs to the peptidase A1 family. As to quaternary structure, two-subunit monomeric unit made of alpha and beta subunits coupled by disulfide bonds (at pH 4.5 and under non-reducing conditions). Can also form oligomers including dimer, tetramer and cyclic hexamer (trimer of dimers) (at pH &gt; 5.5). Component of globulins complexes which accumulate in seeds. Interacts with flavonoids (e.g. apigenin glucosides) present in globulins complexes. Glycosylated on alpha chain. Expressed in developing seeds and in the young roots and cotyledons of germinating seeds and young seedlings.

It localises to the secreted. It is found in the extracellular space. Sulfur-rich seed storage protein that remains undegraded at germination. The polypeptide is Gamma conglutin 2 (Lupinus albus (White lupine)).